We begin with the raw amino-acid sequence, 634 residues long: Chaperone protein HtpG (634 aa).

Residues Met-1 to Arg-342 form an a; substrate-binding region. A b region spans residues Glu-343 to Arg-559. The interval Leu-560–Asp-634 is c.

Belongs to the heat shock protein 90 family. Homodimer.

It is found in the cytoplasm. Functionally, molecular chaperone. Has ATPase activity. This chain is Chaperone protein HtpG, found in Nitrosococcus oceani (strain ATCC 19707 / BCRC 17464 / JCM 30415 / NCIMB 11848 / C-107).